The chain runs to 103 residues: Pyrimidine/purine nucleoside phosphorylase (103 aa).

Belongs to the nucleoside phosphorylase PpnP family.

The catalysed reaction is a purine D-ribonucleoside + phosphate = a purine nucleobase + alpha-D-ribose 1-phosphate. It carries out the reaction adenosine + phosphate = alpha-D-ribose 1-phosphate + adenine. The enzyme catalyses cytidine + phosphate = cytosine + alpha-D-ribose 1-phosphate. It catalyses the reaction guanosine + phosphate = alpha-D-ribose 1-phosphate + guanine. The catalysed reaction is inosine + phosphate = alpha-D-ribose 1-phosphate + hypoxanthine. It carries out the reaction thymidine + phosphate = 2-deoxy-alpha-D-ribose 1-phosphate + thymine. The enzyme catalyses uridine + phosphate = alpha-D-ribose 1-phosphate + uracil. It catalyses the reaction xanthosine + phosphate = alpha-D-ribose 1-phosphate + xanthine. Functionally, catalyzes the phosphorolysis of diverse nucleosides, yielding D-ribose 1-phosphate and the respective free bases. Can use uridine, adenosine, guanosine, cytidine, thymidine, inosine and xanthosine as substrates. Also catalyzes the reverse reactions. The protein is Pyrimidine/purine nucleoside phosphorylase of Shewanella frigidimarina (strain NCIMB 400).